Reading from the N-terminus, the 373-residue chain is Dual-specificity RNA methyltransferase RlmN (373 aa).

Glutamate 94 acts as the Proton acceptor in catalysis. The Radical SAM core domain occupies glutamate 100–aspartate 339. An intrachain disulfide couples cysteine 107 to cysteine 344. [4Fe-4S] cluster is bound by residues cysteine 114, cysteine 118, and cysteine 121. S-adenosyl-L-methionine contacts are provided by residues glycine 168–glutamate 169, serine 200, serine 222–histidine 224, and asparagine 301. Cysteine 344 functions as the S-methylcysteine intermediate in the catalytic mechanism.

It belongs to the radical SAM superfamily. RlmN family. It depends on [4Fe-4S] cluster as a cofactor.

It localises to the cytoplasm. It catalyses the reaction adenosine(2503) in 23S rRNA + 2 reduced [2Fe-2S]-[ferredoxin] + 2 S-adenosyl-L-methionine = 2-methyladenosine(2503) in 23S rRNA + 5'-deoxyadenosine + L-methionine + 2 oxidized [2Fe-2S]-[ferredoxin] + S-adenosyl-L-homocysteine. The catalysed reaction is adenosine(37) in tRNA + 2 reduced [2Fe-2S]-[ferredoxin] + 2 S-adenosyl-L-methionine = 2-methyladenosine(37) in tRNA + 5'-deoxyadenosine + L-methionine + 2 oxidized [2Fe-2S]-[ferredoxin] + S-adenosyl-L-homocysteine. Its function is as follows. Specifically methylates position 2 of adenine 2503 in 23S rRNA and position 2 of adenine 37 in tRNAs. m2A2503 modification seems to play a crucial role in the proofreading step occurring at the peptidyl transferase center and thus would serve to optimize ribosomal fidelity. This Shewanella baltica (strain OS223) protein is Dual-specificity RNA methyltransferase RlmN.